Consider the following 424-residue polypeptide: uncharacterized protein (424 aa).

The protein belongs to the serpin family.

This is an uncharacterized protein from Methanosarcina acetivorans (strain ATCC 35395 / DSM 2834 / JCM 12185 / C2A).